Consider the following 328-residue polypeptide: DNA-directed RNA polymerase subunit alpha (328 aa).

The tract at residues 1-230 (MIQITGRKFK…IILDHFMFIE (230 aa)) is alpha N-terminal domain (alpha-NTD). Positions 257–328 (PEDVMSKKVE…FGLSLRKGDK (72 aa)) are alpha C-terminal domain (alpha-CTD).

The protein belongs to the RNA polymerase alpha chain family. Homodimer. The RNAP catalytic core consists of 2 alpha, 1 beta, 1 beta' and 1 omega subunit. When a sigma factor is associated with the core the holoenzyme is formed, which can initiate transcription.

The enzyme catalyses RNA(n) + a ribonucleoside 5'-triphosphate = RNA(n+1) + diphosphate. In terms of biological role, DNA-dependent RNA polymerase catalyzes the transcription of DNA into RNA using the four ribonucleoside triphosphates as substrates. The polypeptide is DNA-directed RNA polymerase subunit alpha (Fervidobacterium nodosum (strain ATCC 35602 / DSM 5306 / Rt17-B1)).